We begin with the raw amino-acid sequence, 268 residues long: DNA ligase (268 aa).

The N6-AMP-lysine intermediate role is filled by lysine 41. ATP is bound by residues phenylalanine 111, arginine 181, and lysine 187.

It belongs to the ATP-dependent DNA ligase family. It depends on a divalent metal cation as a cofactor.

The catalysed reaction is ATP + (deoxyribonucleotide)n-3'-hydroxyl + 5'-phospho-(deoxyribonucleotide)m = (deoxyribonucleotide)n+m + AMP + diphosphate.. Catalyzes efficient strand joining on a single nicked DNA. This is DNA ligase (ligA) from Haemophilus influenzae (strain ATCC 51907 / DSM 11121 / KW20 / Rd).